A 521-amino-acid polypeptide reads, in one-letter code: Importin subunit alpha-3 (521 aa).

Position 2 is an N-acetylalanine (alanine 2). Residues 2–58 (ADNEKLDNQRLKNFKNKGRDLETMRRQRNEVVVELRKNKRDEHLLKRRNVPQEDICE) enclose the IBB domain. The Nuclear localization signal motif lies at 43-52 (EHLLKRRNVP). At serine 60 the chain carries Phosphoserine. An ARM 1; truncated repeat occupies 66–106 (YRVQNTSLEAIVQNASSDNQGIQLSAVQAARKLLSSDRNPP). 8 ARM repeats span residues 107–149 (IDDL…TSEQ), 150–194 (TQAV…CRDY), 195–233 (VISL…HKDP), 234–278 (PPPM…EQIQ), 279–318 (MVID…TDEQ), 319–360 (TQVV…NQQQ), 361–400 (VQAV…ISGR), and 401–443 (KDQV…KMAE). The segment at 137 to 229 (WALTNIASGT…VTWVMVNLCR (93 aa)) is NLS binding site (major). The segment at 306-394 (RAVGNIVTGT…QKEAAWAISN (89 aa)) is NLS binding site (minor). One copy of the ARM 10; atypical repeat lies at 447-485 (ETIANLIEECGGLEKIEQLQNHENEDIYKLAYEIIDQFF).

Belongs to the importin alpha family. In terms of assembly, forms a complex with importin subunit beta-1 (KPNB1). Interacts with SNAI1. Interacts with TALDO1 isoform 1. Interacts with CYB1. As to expression, detected more or less in all tissues examined (Ehrlich ascites tumor cells, testis, kidney, spleen, liver, heart, lung, thymus, skeletal muscle, cerebellum and brain (without cerebellum)). Multiple-sized transcripts were highly expressed, especially in testis.

The protein resides in the cytoplasm. The protein localises to the nucleus. Functions in nuclear protein import as an adapter protein for nuclear receptor KPNB1. Binds specifically and directly to substrates containing either a simple or bipartite NLS motif. Docking of the importin/substrate complex to the nuclear pore complex (NPC) is mediated by KPNB1 through binding to nucleoporin FxFG repeats and the complex is subsequently translocated through the pore by an energy requiring, Ran-dependent mechanism. At the nucleoplasmic side of the NPC, Ran binds to importin-beta and the three components separate and importin-alpha and -beta are re-exported from the nucleus to the cytoplasm where GTP hydrolysis releases Ran from importin. The directionality of nuclear import is thought to be conferred by an asymmetric distribution of the GTP- and GDP-bound forms of Ran between the cytoplasm and nucleus. Mediates nuclear import of AARS1, MRTFA and RANBP3. This chain is Importin subunit alpha-3 (Kpna4), found in Mus musculus (Mouse).